Reading from the N-terminus, the 602-residue chain is Arginine--tRNA ligase (602 aa).

Residues 124–134 (ANPTGPVHVGR) carry the 'HIGH' region motif.

The protein belongs to the class-I aminoacyl-tRNA synthetase family.

Its subcellular location is the cytoplasm. It carries out the reaction tRNA(Arg) + L-arginine + ATP = L-arginyl-tRNA(Arg) + AMP + diphosphate. In Halorubrum lacusprofundi (strain ATCC 49239 / DSM 5036 / JCM 8891 / ACAM 34), this protein is Arginine--tRNA ligase.